Here is a 370-residue protein sequence, read N- to C-terminus: 4-hydroxy-3-methylbut-2-en-1-yl diphosphate synthase (flavodoxin) (370 aa).

[4Fe-4S] cluster contacts are provided by cysteine 268, cysteine 271, cysteine 303, and glutamate 310.

This sequence belongs to the IspG family. [4Fe-4S] cluster serves as cofactor.

It catalyses the reaction (2E)-4-hydroxy-3-methylbut-2-enyl diphosphate + oxidized [flavodoxin] + H2O + 2 H(+) = 2-C-methyl-D-erythritol 2,4-cyclic diphosphate + reduced [flavodoxin]. Its pathway is isoprenoid biosynthesis; isopentenyl diphosphate biosynthesis via DXP pathway; isopentenyl diphosphate from 1-deoxy-D-xylulose 5-phosphate: step 5/6. Converts 2C-methyl-D-erythritol 2,4-cyclodiphosphate (ME-2,4cPP) into 1-hydroxy-2-methyl-2-(E)-butenyl 4-diphosphate. The sequence is that of 4-hydroxy-3-methylbut-2-en-1-yl diphosphate synthase (flavodoxin) from Bacillus licheniformis (strain ATCC 14580 / DSM 13 / JCM 2505 / CCUG 7422 / NBRC 12200 / NCIMB 9375 / NCTC 10341 / NRRL NRS-1264 / Gibson 46).